Consider the following 296-residue polypeptide: Thymidylate synthase (296 aa).

DUMP is bound by residues R24 and R151 to R152. C171 acts as the Nucleophile in catalysis. DUMP-binding positions include R197–D200, N208, and H238–Y240. D200 serves as a coordination point for (6R)-5,10-methylene-5,6,7,8-tetrahydrofolate.

It belongs to the thymidylate synthase family. In terms of assembly, homodimer.

The enzyme catalyses dUMP + (6R)-5,10-methylene-5,6,7,8-tetrahydrofolate = 7,8-dihydrofolate + dTMP. The protein operates within pyrimidine metabolism; dTTP biosynthesis. This is Thymidylate synthase (tms1) from Agaricus bisporus (White button mushroom).